Here is a 619-residue protein sequence, read N- to C-terminus: uncharacterized protein (619 aa).

A signal peptide spans 1–21 (MKKLIAIIAVAAVVIAGFVFT).

This is an uncharacterized protein from Archaeoglobus fulgidus (strain ATCC 49558 / DSM 4304 / JCM 9628 / NBRC 100126 / VC-16).